Here is a 392-residue protein sequence, read N- to C-terminus: Probable tRNA sulfurtransferase (392 aa).

Residues 59–166 (DEIIERVKKV…ECSFVFTKKV (108 aa)) form the THUMP domain. ATP contacts are provided by residues 183-184 (LL), 208-209 (HF), R265, G287, and Q296.

Belongs to the ThiI family.

The protein resides in the cytoplasm. It carries out the reaction [ThiI sulfur-carrier protein]-S-sulfanyl-L-cysteine + a uridine in tRNA + 2 reduced [2Fe-2S]-[ferredoxin] + ATP + H(+) = [ThiI sulfur-carrier protein]-L-cysteine + a 4-thiouridine in tRNA + 2 oxidized [2Fe-2S]-[ferredoxin] + AMP + diphosphate. The enzyme catalyses [ThiS sulfur-carrier protein]-C-terminal Gly-Gly-AMP + S-sulfanyl-L-cysteinyl-[cysteine desulfurase] + AH2 = [ThiS sulfur-carrier protein]-C-terminal-Gly-aminoethanethioate + L-cysteinyl-[cysteine desulfurase] + A + AMP + 2 H(+). It participates in cofactor biosynthesis; thiamine diphosphate biosynthesis. Catalyzes the ATP-dependent transfer of a sulfur to tRNA to produce 4-thiouridine in position 8 of tRNAs, which functions as a near-UV photosensor. Also catalyzes the transfer of sulfur to the sulfur carrier protein ThiS, forming ThiS-thiocarboxylate. This is a step in the synthesis of thiazole, in the thiamine biosynthesis pathway. The sulfur is donated as persulfide by IscS. This Alkaliphilus metalliredigens (strain QYMF) protein is Probable tRNA sulfurtransferase.